The sequence spans 368 residues: Agmatine deiminase (368 aa).

Catalysis depends on Cys-357, which acts as the Amidino-cysteine intermediate.

Belongs to the agmatine deiminase family. As to quaternary structure, homodimer.

It carries out the reaction agmatine + H2O = N-carbamoylputrescine + NH4(+). It functions in the pathway amine and polyamine biosynthesis; putrescine biosynthesis via agmatine pathway; N-carbamoylputrescine from agmatine: step 1/1. Mediates the hydrolysis of agmatine into N-carbamoylputrescine in the arginine decarboxylase (ADC) pathway of putrescine biosynthesis, a basic polyamine. The chain is Agmatine deiminase from Stutzerimonas stutzeri (strain A1501) (Pseudomonas stutzeri).